A 101-amino-acid polypeptide reads, in one-letter code: Small ribosomal subunit protein uS14 (101 aa).

Residues 1–10 (MAKKSSIEKN) are compositionally biased toward basic and acidic residues. Positions 1–23 (MAKKSSIEKNNRRRRMNRNAAAK) are disordered. Residues 11-23 (NRRRRMNRNAAAK) are compositionally biased toward basic residues.

Belongs to the universal ribosomal protein uS14 family. As to quaternary structure, part of the 30S ribosomal subunit. Contacts proteins S3 and S10.

Its function is as follows. Binds 16S rRNA, required for the assembly of 30S particles and may also be responsible for determining the conformation of the 16S rRNA at the A site. In Nitrobacter winogradskyi (strain ATCC 25391 / DSM 10237 / CIP 104748 / NCIMB 11846 / Nb-255), this protein is Small ribosomal subunit protein uS14.